A 410-amino-acid polypeptide reads, in one-letter code: Arginine deiminase (410 aa).

Catalysis depends on C398, which acts as the Amidino-cysteine intermediate.

This sequence belongs to the arginine deiminase family. As to quaternary structure, homodimer.

It is found in the cytoplasm. The enzyme catalyses L-arginine + H2O = L-citrulline + NH4(+). Its pathway is amino-acid degradation; L-arginine degradation via ADI pathway; carbamoyl phosphate from L-arginine: step 1/2. In Mycoplasmopsis arginini (Mycoplasma arginini), this protein is Arginine deiminase (arcA).